Reading from the N-terminus, the 618-residue chain is Indolepyruvate oxidoreductase subunit IorA (618 aa).

4Fe-4S ferredoxin-type domains lie at 559–590 (RPVR…DGRV) and 588–617 (GRVF…PEGK). [4Fe-4S] cluster-binding residues include Cys568, Cys571, Cys574, Cys580, Cys597, Cys600, Cys603, and Cys607.

In terms of assembly, heterodimer of the IorA and IorB subunits. It depends on [4Fe-4S] cluster as a cofactor.

It catalyses the reaction indole-3-pyruvate + 2 oxidized [2Fe-2S]-[ferredoxin] + CoA = (indol-3-yl)acetyl-CoA + 2 reduced [2Fe-2S]-[ferredoxin] + CO2 + H(+). Its function is as follows. Catalyzes the ferredoxin-dependent oxidative decarboxylation of arylpyruvates. The sequence is that of Indolepyruvate oxidoreductase subunit IorA (iorA) from Methanothermobacter marburgensis (strain ATCC BAA-927 / DSM 2133 / JCM 14651 / NBRC 100331 / OCM 82 / Marburg) (Methanobacterium thermoautotrophicum).